The sequence spans 359 residues: S-adenosylmethionine:tRNA ribosyltransferase-isomerase (359 aa).

The protein belongs to the QueA family. As to quaternary structure, monomer.

It is found in the cytoplasm. The catalysed reaction is 7-aminomethyl-7-carbaguanosine(34) in tRNA + S-adenosyl-L-methionine = epoxyqueuosine(34) in tRNA + adenine + L-methionine + 2 H(+). It functions in the pathway tRNA modification; tRNA-queuosine biosynthesis. Functionally, transfers and isomerizes the ribose moiety from AdoMet to the 7-aminomethyl group of 7-deazaguanine (preQ1-tRNA) to give epoxyqueuosine (oQ-tRNA). This is S-adenosylmethionine:tRNA ribosyltransferase-isomerase from Synechococcus sp. (strain ATCC 27144 / PCC 6301 / SAUG 1402/1) (Anacystis nidulans).